The following is a 1383-amino-acid chain: DNA-directed RNA polymerase subunit beta'' (1383 aa).

Residues Cys220, Cys289, Cys296, and Cys299 each coordinate Zn(2+).

It belongs to the RNA polymerase beta' chain family. RpoC2 subfamily. In terms of assembly, in plastids the minimal PEP RNA polymerase catalytic core is composed of four subunits: alpha, beta, beta', and beta''. When a (nuclear-encoded) sigma factor is associated with the core the holoenzyme is formed, which can initiate transcription. It depends on Zn(2+) as a cofactor.

The protein localises to the plastid. Its subcellular location is the chloroplast. It carries out the reaction RNA(n) + a ribonucleoside 5'-triphosphate = RNA(n+1) + diphosphate. Its function is as follows. DNA-dependent RNA polymerase catalyzes the transcription of DNA into RNA using the four ribonucleoside triphosphates as substrates. The chain is DNA-directed RNA polymerase subunit beta'' from Oenothera biennis (German evening primrose).